Reading from the N-terminus, the 195-residue chain is Peptidyl-tRNA hydrolase (195 aa).

A tRNA-binding site is contributed by Tyr-17. The Proton acceptor role is filled by His-22. Tyr-68, Asn-70, and Asn-116 together coordinate tRNA.

It belongs to the PTH family. Monomer.

The protein resides in the cytoplasm. It carries out the reaction an N-acyl-L-alpha-aminoacyl-tRNA + H2O = an N-acyl-L-amino acid + a tRNA + H(+). Its function is as follows. Hydrolyzes ribosome-free peptidyl-tRNAs (with 1 or more amino acids incorporated), which drop off the ribosome during protein synthesis, or as a result of ribosome stalling. In terms of biological role, catalyzes the release of premature peptidyl moieties from peptidyl-tRNA molecules trapped in stalled 50S ribosomal subunits, and thus maintains levels of free tRNAs and 50S ribosomes. This is Peptidyl-tRNA hydrolase from Shewanella frigidimarina (strain NCIMB 400).